Consider the following 288-residue polypeptide: Phosphatidylserine decarboxylase proenzyme (288 aa).

Residues aspartate 88, histidine 145, and serine 248 each act as charge relay system; for autoendoproteolytic cleavage activity in the active site. The active-site Schiff-base intermediate with substrate; via pyruvic acid; for decarboxylase activity is the serine 248. Position 248 is a pyruvic acid (Ser); by autocatalysis (serine 248).

It belongs to the phosphatidylserine decarboxylase family. PSD-B subfamily. Prokaryotic type I sub-subfamily. In terms of assembly, heterodimer of a large membrane-associated beta subunit and a small pyruvoyl-containing alpha subunit. The cofactor is pyruvate. In terms of processing, is synthesized initially as an inactive proenzyme. Formation of the active enzyme involves a self-maturation process in which the active site pyruvoyl group is generated from an internal serine residue via an autocatalytic post-translational modification. Two non-identical subunits are generated from the proenzyme in this reaction, and the pyruvate is formed at the N-terminus of the alpha chain, which is derived from the carboxyl end of the proenzyme. The autoendoproteolytic cleavage occurs by a canonical serine protease mechanism, in which the side chain hydroxyl group of the serine supplies its oxygen atom to form the C-terminus of the beta chain, while the remainder of the serine residue undergoes an oxidative deamination to produce ammonia and the pyruvoyl prosthetic group on the alpha chain. During this reaction, the Ser that is part of the protease active site of the proenzyme becomes the pyruvoyl prosthetic group, which constitutes an essential element of the active site of the mature decarboxylase.

Its subcellular location is the cell membrane. The catalysed reaction is a 1,2-diacyl-sn-glycero-3-phospho-L-serine + H(+) = a 1,2-diacyl-sn-glycero-3-phosphoethanolamine + CO2. Its pathway is phospholipid metabolism; phosphatidylethanolamine biosynthesis; phosphatidylethanolamine from CDP-diacylglycerol: step 2/2. In terms of biological role, catalyzes the formation of phosphatidylethanolamine (PtdEtn) from phosphatidylserine (PtdSer). This is Phosphatidylserine decarboxylase proenzyme from Azoarcus sp. (strain BH72).